A 376-amino-acid chain; its full sequence is MQCALYDAGRCRSCQWITQSVNEQLSAKTADLHRLLAGLPVEQWCAPIGGPEQHFRNKAKMVVSGSVEKPLFGMLHRDGTPVDLCGCPLYPASFAPVFSALKPFIARAGLTPYNVARKRGELKYLLLTESQFDGGMMLRFVLRSETKLTQLRAALPWLRAQLPQLRVITANIQPVHMAIMEGETEIYLTDQQALVERFNDVPLWIRPQSFFQTNPTVASRLYATARDWVGQLPVRHMWDLFCGVGGFGLHCATPQMQLTGIEIAPEAIACAKQSAAELGLTRLHFQALDSTQFAIAQGETPDLVLVNPPRRGIGKPLCDYLAQMAPRFIIYSSCNAQTMAQDIRHLPNYRIQRVQLFDMFPHTAHYEVLALLRRSI.

C3, C11, C14, and C87 together coordinate [4Fe-4S] cluster. S-adenosyl-L-methionine-binding residues include Q212, F241, E262, and N307. Residue C334 is the Nucleophile of the active site.

It belongs to the class I-like SAM-binding methyltransferase superfamily. RNA M5U methyltransferase family. RlmC subfamily.

It catalyses the reaction uridine(747) in 23S rRNA + S-adenosyl-L-methionine = 5-methyluridine(747) in 23S rRNA + S-adenosyl-L-homocysteine + H(+). Functionally, catalyzes the formation of 5-methyl-uridine at position 747 (m5U747) in 23S rRNA. The protein is 23S rRNA (uracil(747)-C(5))-methyltransferase RlmC of Salmonella choleraesuis (strain SC-B67).